Here is a 377-residue protein sequence, read N- to C-terminus: uncharacterized protein (377 aa).

The interval 345–377 is disordered; sequence VGPSPPAYEQVARSSPTDIPLPPPSCPTNVQRD.

This is an uncharacterized protein from Schizosaccharomyces pombe (strain 972 / ATCC 24843) (Fission yeast).